A 162-amino-acid chain; its full sequence is UPF0114 protein PST_0950 (162 aa).

The next 3 membrane-spanning stretches (helical) occupy residues 15–35, 53–73, and 136–156; these read LLAPIYFGLAFALLALAIKFF, LVLTLLSLIDMALVGGLLVMV, and LMWYVIIHLTFVVSAFAMGYM.

The protein belongs to the UPF0114 family.

It localises to the cell membrane. This chain is UPF0114 protein PST_0950, found in Stutzerimonas stutzeri (strain A1501) (Pseudomonas stutzeri).